The sequence spans 276 residues: Protein-glutamine gamma-glutamyltransferase (276 aa).

Belongs to the bacillus TGase family.

The catalysed reaction is L-glutaminyl-[protein] + L-lysyl-[protein] = [protein]-L-lysyl-N(6)-5-L-glutamyl-[protein] + NH4(+). Its function is as follows. Probably plays a role in the assembly of the spore coat proteins by catalyzing epsilon-(gamma-glutamyl)lysine cross-links. The polypeptide is Protein-glutamine gamma-glutamyltransferase (Bacillus cereus (strain G9842)).